A 347-amino-acid chain; its full sequence is NADH-ubiquinone oxidoreductase chain 2 (347 aa).

Transmembrane regions (helical) follow at residues methionine 1–valine 21, histidine 25–methionine 45, tyrosine 59–methionine 79, threonine 96–proline 116, isoleucine 122–leucine 142, isoleucine 149–glycine 169, isoleucine 178–proline 198, leucine 200–isoleucine 220, methionine 237–leucine 257, aspartate 274–methionine 294, and leucine 325–isoleucine 345.

This sequence belongs to the complex I subunit 2 family. Core subunit of respiratory chain NADH dehydrogenase (Complex I) which is composed of 45 different subunits. Interacts with TMEM242.

The protein resides in the mitochondrion inner membrane. The catalysed reaction is a ubiquinone + NADH + 5 H(+)(in) = a ubiquinol + NAD(+) + 4 H(+)(out). In terms of biological role, core subunit of the mitochondrial membrane respiratory chain NADH dehydrogenase (Complex I) which catalyzes electron transfer from NADH through the respiratory chain, using ubiquinone as an electron acceptor. Essential for the catalytic activity and assembly of complex I. The chain is NADH-ubiquinone oxidoreductase chain 2 from Balaenoptera physalus (Fin whale).